A 583-amino-acid polypeptide reads, in one-letter code: Transmembrane protein 108 (583 aa).

A helical membrane pass occupies residues 7–27; the sequence is ALYCQLLSFLLTLALTEALVF. An interacts with SH3GL2 region spans residues 31–176; that stretch reads EPSPRESLQV…ATIRRPPRPP (146 aa). Disordered regions lie at residues 71 to 360 and 376 to 404; these read VTPT…GVFA and VPSE…STVS. 2 stretches are compositionally biased toward polar residues: residues 80-93 and 100-122; these read PSSQ…TTTP and PTNT…SLST. Residues 177–187 are compositionally biased toward low complexity; it reads GSSRKGAGSSP. Residues 180-413 are interacts with DST (isoform 1); it reads RKGAGSSPRP…SQAEEKAVAT (234 aa). Polar residues-rich tracts occupy residues 251 to 273, 310 to 319, and 333 to 357; these read YSSS…SWVP, ASGTPASQQR, and DGSS…TNSG. The helical transmembrane segment at 477–497 threads the bilayer; sequence IAWVILAISVPISSCSVLLTV. The interaction with CYFIP2 stretch occupies residues 498–583; sequence CCLRRKKKPA…FVGNDQVSEI (86 aa).

In terms of assembly, interacts with DST (isoform 1). Interacts with SH3GL2. Interacts (via N-terminus) with CYFIP1 and CYFIP2; the interactions associate TMEM108 with the WAVE1 complex. Glycosylated.

The protein localises to the membrane. The protein resides in the postsynaptic density. Its subcellular location is the endosome membrane. It localises to the cell projection. It is found in the axon. The protein localises to the dendrite. The protein resides in the early endosome. Its function is as follows. Transmembrane protein required for proper cognitive functions. Involved in the development of dentate gyrus (DG) neuron circuitry, is necessary for AMPA receptors surface expression and proper excitatory postsynaptic currents of DG granule neurons. Regulates the organization and stability of the microtubule network of sensory neurons to allow axonal transport. Through the interaction with DST, mediates the docking of the dynein/dynactin motor complex to vesicle cargos for retrograde axonal transport. In hippocampal neurons, required for BDNF-dependent dendrite outgrowth. Cooperates with SH3GL2 and recruits the WAVE1 complex to facilitate actin-dependent BDNF:NTRK2 early endocytic trafficking and mediate signaling from early endosomes. The chain is Transmembrane protein 108 from Bos taurus (Bovine).